Reading from the N-terminus, the 383-residue chain is MAEKRDYYDVLGVGRDASDDEIKKAYRKLSKKYHPDINKAPDAEAKFKEVTEAYEALSDPQKRAAYDQYGHAGMNGGFGGGAGAGQGFGGFGGGAEGFGGFDDIFSSFFGGGARQQPNGPRQGSDLQYRMDLKFEEAVFGKETKISYSREAECHTCHGSGAKPGTSAETCHKCHGAGQIQVERQTPLGRMMSRETCDVCGGTGKEIKSKCDTCHGTGREEERHTVKVKVPAGVEDGQQMRLQGQGEAGSNGGPYGDLFIVFRVAPSDEFERDGAQIFVEVPISFVQAALGDEIEVNTVHGPVKLKIPAGTQTNTVFRLRGKGAPKLHGTGNGDQNVTVNVVTPKTLNSKQRDALKAFAVASGDSVNPQDSNLFDKILNKKYKK.

Residues 6–70 enclose the J domain; the sequence is DYYDVLGVGR…QKRAAYDQYG (65 aa). A CR-type zinc finger spans residues 140 to 222; that stretch reads GKETKISYSR…CHGTGREEER (83 aa). Positions 153, 156, 170, 173, 196, 199, 210, and 213 each coordinate Zn(2+). CXXCXGXG motif repeat units follow at residues 153–160, 170–177, 196–203, and 210–217; these read CHTCHGSG, CHKCHGAG, CDVCGGTG, and CDTCHGTG.

It belongs to the DnaJ family. As to quaternary structure, homodimer. Zn(2+) is required as a cofactor.

The protein resides in the cytoplasm. Its function is as follows. Participates actively in the response to hyperosmotic and heat shock by preventing the aggregation of stress-denatured proteins and by disaggregating proteins, also in an autonomous, DnaK-independent fashion. Unfolded proteins bind initially to DnaJ; upon interaction with the DnaJ-bound protein, DnaK hydrolyzes its bound ATP, resulting in the formation of a stable complex. GrpE releases ADP from DnaK; ATP binding to DnaK triggers the release of the substrate protein, thus completing the reaction cycle. Several rounds of ATP-dependent interactions between DnaJ, DnaK and GrpE are required for fully efficient folding. Also involved, together with DnaK and GrpE, in the DNA replication of plasmids through activation of initiation proteins. This is Chaperone protein DnaJ from Latilactobacillus sakei subsp. sakei (strain 23K) (Lactobacillus sakei subsp. sakei).